The primary structure comprises 177 residues: Protein ParB (177 aa).

The N-terminal stretch at 1–26 (MKRRSYAMLRAAAALAVLVVASPAWA) is a signal peptide. The 131-residue stretch at 27-157 (ELRGEVVRII…RGKRVGLWSD (131 aa)) folds into the TNase-like domain. Active-site residues include R53, E61, and R95.

Monomer. It depends on Ca(2+) as a cofactor. Post-translationally, the N-terminus is blocked.

The protein localises to the secreted. With respect to regulation, endonuclease activity is inhibited by EDTA. In terms of biological role, involved in plasmid partition. An endonuclease that acts on supercoiled dsDNA, converting it first to open circular DNA and then linearizing it. Preferentially cleaves regions in dsDNA that are capable of forming ssDNA, such as AT-rich regions and sequences that can form cruciforms. Has poor endonucleolytic activity on linear DNA, has 5'-3' exonuclease activity on dsDNA cleaving generating 3'-phosphonucleotides. This chain is Protein ParB, found in Escherichia coli.